The following is a 275-amino-acid chain: WIMGHMVNSIEQVDKFLDLGANAIEFDVDFDDDGVAKYTHHGIPCDCGRLCNKYAVFTEYLDYVRQVTTPGDPKFRKELVLLALDLKLQRISSEKAYAAGVDVATKLLDHYWMRGKNGGRAYILLNIPLVKHYEFIRAFKDTLRKEGHEQYNAKVGINFTGNEDLDEIRKVLEKLGEDEHIWQADGIASCIPRGTERLKKVLEKRDTPGYKYISKVYAWTLVRSSIMRRSLSLGVDGVMSNYPDIVVKVLKEKKFSDKFRLATYADNPWEKFTPI.

H5 is a catalytic residue. Mg(2+)-binding residues include E25 and D27. The Nucleophile role is filled by H41. 2 disulfide bridges follow: C45/C51 and C47/C190. Residue D85 coordinates Mg(2+).

Belongs to the arthropod phospholipase D family. Class II subfamily. Mg(2+) is required as a cofactor. In terms of tissue distribution, expressed by the venom gland.

The protein resides in the secreted. The enzyme catalyses an N-(acyl)-sphingosylphosphocholine = an N-(acyl)-sphingosyl-1,3-cyclic phosphate + choline. It carries out the reaction an N-(acyl)-sphingosylphosphoethanolamine = an N-(acyl)-sphingosyl-1,3-cyclic phosphate + ethanolamine. The catalysed reaction is a 1-acyl-sn-glycero-3-phosphocholine = a 1-acyl-sn-glycero-2,3-cyclic phosphate + choline. It catalyses the reaction a 1-acyl-sn-glycero-3-phosphoethanolamine = a 1-acyl-sn-glycero-2,3-cyclic phosphate + ethanolamine. Functionally, dermonecrotic toxins cleave the phosphodiester linkage between the phosphate and headgroup of certain phospholipids (sphingolipid and lysolipid substrates), forming an alcohol (often choline) and a cyclic phosphate. This toxin acts on sphingomyelin (SM). It may also act on ceramide phosphoethanolamine (CPE), lysophosphatidylcholine (LPC) and lysophosphatidylethanolamine (LPE), but not on lysophosphatidylserine (LPS), and lysophosphatidylglycerol (LPG). It acts by transphosphatidylation, releasing exclusively cyclic phosphate products as second products. Induces dermonecrosis, hemolysis, increased vascular permeability, edema, inflammatory response, and platelet aggregation. This chain is Dermonecrotic toxin SpeSicTox-betaIIA1, found in Sicarius peruensis (Six-eyed sand spider).